A 452-amino-acid chain; its full sequence is uncharacterized protein (452 aa).

Helical transmembrane passes span 8–28, 39–59, 77–97, 100–122, 134–156, 161–183, 203–222, 226–243, 266–286, 302–322, 330–350, 359–379, 393–415, and 425–447; these read AVFL…SSMI, FHLS…ASAV, FLFG…APTF, LLVM…VGLI, LAVL…GFLI, WPAI…LYMF, LGIV…LLSF, PHAV…AFVW, AVYV…FGLP, LFML…GKWI, PIFA…IFFI, LILS…QAAM, GLFQ…ILFG, and MMGI…FAAL.

Belongs to the major facilitator superfamily.

Its subcellular location is the cell membrane. This is an uncharacterized protein from Bacillus subtilis (strain 168).